We begin with the raw amino-acid sequence, 247 residues long: Adenosylcobinamide-GDP ribazoletransferase (247 aa).

The next 5 helical transmembrane spans lie at 34–54, 59–79, 113–133, 138–158, and 194–214; these read IITF…VFMV, CGVP…TGGF, GGLA…ELAL, ILAS…LLMY, and VLLP…AIFI.

The protein belongs to the CobS family. The cofactor is Mg(2+).

The protein localises to the cell inner membrane. The catalysed reaction is alpha-ribazole + adenosylcob(III)inamide-GDP = adenosylcob(III)alamin + GMP + H(+). It catalyses the reaction alpha-ribazole 5'-phosphate + adenosylcob(III)inamide-GDP = adenosylcob(III)alamin 5'-phosphate + GMP + H(+). It participates in cofactor biosynthesis; adenosylcobalamin biosynthesis; adenosylcobalamin from cob(II)yrinate a,c-diamide: step 7/7. In terms of biological role, joins adenosylcobinamide-GDP and alpha-ribazole to generate adenosylcobalamin (Ado-cobalamin). Also synthesizes adenosylcobalamin 5'-phosphate from adenosylcobinamide-GDP and alpha-ribazole 5'-phosphate. The polypeptide is Adenosylcobinamide-GDP ribazoletransferase (Escherichia coli (strain 55989 / EAEC)).